A 219-amino-acid polypeptide reads, in one-letter code: Inner membrane protein YghB (219 aa).

At 1 to 17 (MAVIQDIIAALWQHDFA) the chain is on the cytoplasmic side. Residues 18–38 (ALADPHIVSVVYFVMFATLFL) form a helical membrane-spanning segment. The Periplasmic portion of the chain corresponds to 39–67 (ENGLLPASFLPGDSLLILAGALIAQGVMD). A helical transmembrane segment spans residues 68-88 (FLPTIAILTAAASLGCWLSYI). Residues 89 to 160 (QGRWLGNTKT…RRFQFFNWLS (72 aa)) are Cytoplasmic-facing. Residues 161 to 181 (GLLWVSVVTSFGYALSMIPFV) form a helical membrane-spanning segment. The Periplasmic portion of the chain corresponds to 182–191 (KRHEDQVMTF). The chain crosses the membrane as a helical span at residues 192-212 (LMILPIALLTAGLLGTLFVVI). Residues 213-219 (KKKYCNA) are Cytoplasmic-facing.

This sequence belongs to the DedA family.

Its subcellular location is the cell inner membrane. The sequence is that of Inner membrane protein YghB (yghB) from Escherichia coli O6:H1 (strain CFT073 / ATCC 700928 / UPEC).